The following is a 62-amino-acid chain: Large ribosomal subunit protein bL32 (62 aa).

It belongs to the bacterial ribosomal protein bL32 family.

The sequence is that of Large ribosomal subunit protein bL32 from Treponema denticola (strain ATCC 35405 / DSM 14222 / CIP 103919 / JCM 8153 / KCTC 15104).